Reading from the N-terminus, the 265-residue chain is 5'-nucleotidase SurE (265 aa).

Positions 11, 12, 43, and 101 each coordinate a divalent metal cation.

This sequence belongs to the SurE nucleotidase family. A divalent metal cation serves as cofactor.

It localises to the cytoplasm. It catalyses the reaction a ribonucleoside 5'-phosphate + H2O = a ribonucleoside + phosphate. Its function is as follows. Nucleotidase that shows phosphatase activity on nucleoside 5'-monophosphates. In Synechococcus sp. (strain CC9311), this protein is 5'-nucleotidase SurE.